Here is a 304-residue protein sequence, read N- to C-terminus: MRLPIFLDTDPGIDDAVAIAAAIFAPELDLQLMTTVAGNVSVEKTTRNALQLLHFWNAEIPLAQGAAVPLVRAPRDAASVHGESGMAGYDFVEHNRQPLGIPAFLAIRDALMRAPEPVTLVAIGPLTNIALLLSQCPECKPYIRRLVIMGGSAGRGNCTPNAEFNIAADPEAAACVFRSGIEIVMCGLDVTNQAILTPDYLATLPELNRTGKMLHALFSHYRSGSMQSGLRMHDLCAIAWLVRPELFTLKPCFVAVETQGEFTSGTTVVDIDGCLGKPANVQVALDLDVKGFQQWVAEVLALAL.

Residue His-233 is part of the active site.

This sequence belongs to the IUNH family. RihC subfamily.

Its function is as follows. Hydrolyzes both purine and pyrimidine ribonucleosides with a broad-substrate specificity. The chain is Non-specific ribonucleoside hydrolase RihC from Escherichia coli O6:H1 (strain CFT073 / ATCC 700928 / UPEC).